We begin with the raw amino-acid sequence, 215 residues long: L-fuculose phosphate aldolase (215 aa).

Residues 28 to 29 (GN), 43 to 44 (TG), and 71 to 72 (SS) contribute to the substrate site. Residue Glu-73 is the Proton donor/acceptor of the active site. The Zn(2+) site is built by Glu-73, His-92, His-94, and His-155.

This sequence belongs to the aldolase class II family. AraD/FucA subfamily. In terms of assembly, homotetramer. Requires Zn(2+) as cofactor.

The enzyme catalyses L-fuculose 1-phosphate = (S)-lactaldehyde + dihydroxyacetone phosphate. Its pathway is carbohydrate degradation; L-fucose degradation; L-lactaldehyde and glycerone phosphate from L-fucose: step 3/3. Its activity is regulated as follows. Inhibited by phosphoglycolohydroxamate (PGH). Involved in the degradation of L-fucose and D-arabinose. Catalyzes the reversible cleavage of L-fuculose 1-phosphate (Fuc1P) to yield dihydroxyacetone phosphate (DHAP) and L-lactaldehyde. Also able to catalyze the reversible cleavage of D-ribulose 1-phosphate, but FucA has a higher affinity for L-fuculose 1-phosphate and L-lactaldehyde than for D-ribulose 1-phosphate and glycolaldehyde, respectively. FucA possesses a high specificity for the dihydroxyacetone phosphate (DHAP), but accepts a great variety of different aldehydes and has a strong preference for L-configurated alpha-hydroxy aldehydes. FucA generates a vicinal diol unit having the absolute (3R,4R)-cis configuration (D-erythro). The sequence is that of L-fuculose phosphate aldolase from Escherichia coli (strain K12).